Reading from the N-terminus, the 491-residue chain is GTPase Der (491 aa).

EngA-type G domains are found at residues proline 54–serine 217 and arginine 229–aspartate 402. GTP-binding positions include glycine 60–serine 67, aspartate 107–tryptophan 111, asparagine 169–aspartate 172, glycine 235–serine 242, aspartate 282–isoleucine 286, and asparagine 347–aspartate 350. The 83-residue stretch at arginine 403–glutamate 485 folds into the KH-like domain.

It belongs to the TRAFAC class TrmE-Era-EngA-EngB-Septin-like GTPase superfamily. EngA (Der) GTPase family. As to quaternary structure, associates with the 50S ribosomal subunit.

GTPase that plays an essential role in the late steps of ribosome biogenesis. In Paenarthrobacter aurescens (strain TC1), this protein is GTPase Der.